We begin with the raw amino-acid sequence, 159 residues long: Transcriptional repressor NrdR (159 aa).

A zinc finger spans residues 3 to 34 (CPFCRHDDTQVVDSRVSEDGAAIRRRRRCSAC). The ATP-cone domain maps to 49–139 (PAVVKKDGSR…VYRRFEDVSE (91 aa)).

This sequence belongs to the NrdR family. Requires Zn(2+) as cofactor.

In terms of biological role, negatively regulates transcription of bacterial ribonucleotide reductase nrd genes and operons by binding to NrdR-boxes. This chain is Transcriptional repressor NrdR, found in Burkholderia pseudomallei (strain 1106a).